The following is a 488-amino-acid chain: PPE family protein PPE10 (488 aa).

Disordered regions lie at residues N207–S232 and S443–E488.

Belongs to the mycobacterial PPE family.

It localises to the secreted. Functionally, plays a major role in the integrity and stability of the capsule. In Mycobacterium marinum (strain ATCC BAA-535 / M), this protein is PPE family protein PPE10.